Reading from the N-terminus, the 619-residue chain is 1-deoxy-D-xylulose-5-phosphate synthase (619 aa).

Thiamine diphosphate is bound by residues His-74 and 115 to 117 (GHS). Asp-146 serves as a coordination point for Mg(2+). Thiamine diphosphate-binding positions include 147–148 (GA), Asn-175, Tyr-285, and Glu-365. A Mg(2+)-binding site is contributed by Asn-175.

Belongs to the transketolase family. DXPS subfamily. In terms of assembly, homodimer. It depends on Mg(2+) as a cofactor. Thiamine diphosphate serves as cofactor.

The enzyme catalyses D-glyceraldehyde 3-phosphate + pyruvate + H(+) = 1-deoxy-D-xylulose 5-phosphate + CO2. Its pathway is metabolic intermediate biosynthesis; 1-deoxy-D-xylulose 5-phosphate biosynthesis; 1-deoxy-D-xylulose 5-phosphate from D-glyceraldehyde 3-phosphate and pyruvate: step 1/1. In terms of biological role, catalyzes the acyloin condensation reaction between C atoms 2 and 3 of pyruvate and glyceraldehyde 3-phosphate to yield 1-deoxy-D-xylulose-5-phosphate (DXP). In Clostridium perfringens (strain 13 / Type A), this protein is 1-deoxy-D-xylulose-5-phosphate synthase.